The primary structure comprises 316 residues: Zinc finger protein 330 (316 aa).

Residues 1-24 (MPKKKTGARKKAENRREREKQLRA) form a disordered region. A Nuclear localization signal motif is present at residues 3–11 (KKKTGARKK). A compositionally biased stretch (basic and acidic residues) spans 10-22 (KKAENRREREKQL). 4 consecutive C4-type zinc fingers follow at residues 42–58 (CDKC…CYFC), 67–104 (CAQC…CDFC), 129–149 (CVEC…CSFC), and 175–189 (CVSC…CLRC). The interval 227 to 299 (SMSTRSLKFG…ESSDLFNNLN (73 aa)) is disordered. Over residues 268–291 (DDDEEEDEAEDEEEEDGKDSDAES) the composition is skewed to acidic residues. Ser287 carries the post-translational modification Phosphoserine.

This sequence belongs to the NOA36 family.

It is found in the nucleus. It localises to the nucleolus. The protein localises to the chromosome. Its subcellular location is the centromere. The sequence is that of Zinc finger protein 330 (Znf330) from Mus musculus (Mouse).